Here is a 126-residue protein sequence, read N- to C-terminus: Small ribosomal subunit protein uS12 (126 aa).

The segment at 1-28 (MPTIQQLIRSERSKVQKKTKSPALKQCP) is disordered. D89 is modified (3-methylthioaspartic acid). Residues 104-126 (ATGVKDRKQGRSKYGTKREKAKK) are disordered. Residues 113–126 (GRSKYGTKREKAKK) show a composition bias toward basic residues.

Belongs to the universal ribosomal protein uS12 family. In terms of assembly, part of the 30S ribosomal subunit. Contacts proteins S8 and S17. May interact with IF1 in the 30S initiation complex.

Its function is as follows. With S4 and S5 plays an important role in translational accuracy. Interacts with and stabilizes bases of the 16S rRNA that are involved in tRNA selection in the A site and with the mRNA backbone. Located at the interface of the 30S and 50S subunits, it traverses the body of the 30S subunit contacting proteins on the other side and probably holding the rRNA structure together. The combined cluster of proteins S8, S12 and S17 appears to hold together the shoulder and platform of the 30S subunit. In Synechocystis sp. (strain ATCC 27184 / PCC 6803 / Kazusa), this protein is Small ribosomal subunit protein uS12.